The chain runs to 99 residues: Aspartyl/glutamyl-tRNA(Asn/Gln) amidotransferase subunit C (99 aa).

This sequence belongs to the GatC family. Heterotrimer of A, B and C subunits.

The enzyme catalyses L-glutamyl-tRNA(Gln) + L-glutamine + ATP + H2O = L-glutaminyl-tRNA(Gln) + L-glutamate + ADP + phosphate + H(+). It catalyses the reaction L-aspartyl-tRNA(Asn) + L-glutamine + ATP + H2O = L-asparaginyl-tRNA(Asn) + L-glutamate + ADP + phosphate + 2 H(+). Its function is as follows. Allows the formation of correctly charged Asn-tRNA(Asn) or Gln-tRNA(Gln) through the transamidation of misacylated Asp-tRNA(Asn) or Glu-tRNA(Gln) in organisms which lack either or both of asparaginyl-tRNA or glutaminyl-tRNA synthetases. The reaction takes place in the presence of glutamine and ATP through an activated phospho-Asp-tRNA(Asn) or phospho-Glu-tRNA(Gln). The protein is Aspartyl/glutamyl-tRNA(Asn/Gln) amidotransferase subunit C of Mycolicibacterium vanbaalenii (strain DSM 7251 / JCM 13017 / BCRC 16820 / KCTC 9966 / NRRL B-24157 / PYR-1) (Mycobacterium vanbaalenii).